Reading from the N-terminus, the 621-residue chain is Chaperone protein HscA homolog (621 aa).

It belongs to the heat shock protein 70 family.

In terms of biological role, chaperone involved in the maturation of iron-sulfur cluster-containing proteins. Has a low intrinsic ATPase activity which is markedly stimulated by HscB. The polypeptide is Chaperone protein HscA homolog (Ralstonia nicotianae (strain ATCC BAA-1114 / GMI1000) (Ralstonia solanacearum)).